We begin with the raw amino-acid sequence, 71 residues long: DNA-directed RNA polymerase subunit epsilon (71 aa).

This sequence belongs to the RNA polymerase subunit epsilon family. As to quaternary structure, monomer. RNAP is composed of a core of 2 alpha, a beta and a beta' subunit. The core is associated with a delta subunit, and at least one of epsilon or omega. When a sigma factor is associated with the core the holoenzyme is formed, which can initiate transcription.

The enzyme catalyses RNA(n) + a ribonucleoside 5'-triphosphate = RNA(n+1) + diphosphate. Its function is as follows. A non-essential component of RNA polymerase (RNAP). Has a similar structure to bacteriophage T7 protein Gp2 (AC P03704), which is known to bind to RNAP in the DNA binding-cleft. Unlike Gp2 however, this protein does not inhibit transcription initiation. This chain is DNA-directed RNA polymerase subunit epsilon, found in Geobacillus stearothermophilus (strain DSM 13240 / CIP 106956 / 10).